Consider the following 245-residue polypeptide: Carbohydrate deacetylase (245 aa).

Mg(2+) contacts are provided by His59 and His125.

Belongs to the YdjC deacetylase family. As to quaternary structure, homodimer. It depends on Mg(2+) as a cofactor.

In terms of biological role, probably catalyzes the deacetylation of acetylated carbohydrates an important step in the degradation of oligosaccharides. This is Carbohydrate deacetylase from Listeria welshimeri serovar 6b (strain ATCC 35897 / DSM 20650 / CCUG 15529 / CIP 8149 / NCTC 11857 / SLCC 5334 / V8).